A 321-amino-acid polypeptide reads, in one-letter code: Olfactory receptor 52N4 (321 aa).

Over 1–27 the chain is Extracellular; it reads MLTLNKTDLIPASFILNGVPGLEDTQL. A glycan (N-linked (GlcNAc...) asparagine) is linked at N5. A helical membrane pass occupies residues 28 to 48; sequence WISFPFCSMYVVAMVGNCGLL. Over 49 to 56 the chain is Cytoplasmic; that stretch reads YLIHYEDA. Residues 57–77 form a helical membrane-spanning segment; the sequence is LHKPMYYFLAMLSFTDLVMCS. The Extracellular portion of the chain corresponds to 78–101; it reads STIPKALCIFWFHLKDIGFDECLV. C99 and C191 form a disulfide bridge. Residues 102–122 form a helical membrane-spanning segment; that stretch reads QMFFTHTFTGMESGVLMLMAL. Topologically, residues 123-141 are cytoplasmic; the sequence is DRYVAICYPLRYSTILTNP. Residues 142–162 form a helical membrane-spanning segment; the sequence is VIAKVGTATFLRGVLLIIPFT. Residues 163–198 lie on the Extracellular side of the membrane; that stretch reads FLTKLLPYCRGNILPHTYCDHMSVAKLSCGNVKVNA. The helical transmembrane segment at 199 to 219 threads the bilayer; that stretch reads IYGLMVALLIWGFDILCITNS. The Cytoplasmic portion of the chain corresponds to 220-239; sequence YTMILRAVVSLSSADARQKA. The helical transmembrane segment at 240–260 threads the bilayer; that stretch reads FNTCTAHICAIVFSYTPAFFS. Residues 261-276 are Extracellular-facing; sequence FFSHRFGEHIIPPSCH. The helical transmembrane segment at 277–297 threads the bilayer; the sequence is IIVANIYLLLPPTMNPIVYGV. The Cytoplasmic portion of the chain corresponds to 298–321; it reads KTKQIRDCVIRILSGSKDTKSYSM.

It belongs to the G-protein coupled receptor 1 family.

The protein resides in the cell membrane. Functionally, odorant receptor. The chain is Olfactory receptor 52N4 (OR52N4) from Homo sapiens (Human).